A 175-amino-acid polypeptide reads, in one-letter code: NADH-ubiquinone oxidoreductase chain 6 (175 aa).

The next 6 membrane-spanning stretches (helical) occupy residues 1 to 21 (MMAY…VGFS), 25 to 45 (SPIY…GIVM), 47 to 67 (FGGS…MLVV), 87 to 107 (AAVL…VLYV), 116 to 136 (VFNF…FGVF), and 149 to 169 (YGVW…LVIL).

This sequence belongs to the complex I subunit 6 family. In terms of assembly, core subunit of respiratory chain NADH dehydrogenase (Complex I) which is composed of 45 different subunits.

It is found in the mitochondrion inner membrane. It carries out the reaction a ubiquinone + NADH + 5 H(+)(in) = a ubiquinol + NAD(+) + 4 H(+)(out). Its function is as follows. Core subunit of the mitochondrial membrane respiratory chain NADH dehydrogenase (Complex I) which catalyzes electron transfer from NADH through the respiratory chain, using ubiquinone as an electron acceptor. Essential for the catalytic activity and assembly of complex I. The protein is NADH-ubiquinone oxidoreductase chain 6 (MT-ND6) of Ceratotherium simum (White rhinoceros).